A 44-amino-acid chain; its full sequence is Small ribosomal subunit protein eS31 (44 aa).

Residues cysteine 18, cysteine 21, cysteine 35, and cysteine 38 each contribute to the Zn(2+) site. The C4-type zinc finger occupies cysteine 18–cysteine 38.

It belongs to the eukaryotic ribosomal protein eS31 family. As to quaternary structure, part of the 30S ribosomal subunit. Zn(2+) serves as cofactor.

This is Small ribosomal subunit protein eS31 from Haloarcula marismortui (strain ATCC 43049 / DSM 3752 / JCM 8966 / VKM B-1809) (Halobacterium marismortui).